The primary structure comprises 428 residues: Adenylosuccinate synthetase (428 aa).

GTP-binding positions include 12 to 18 (GDEGKGK) and 40 to 42 (GHT). Residue Asp-13 is the Proton acceptor of the active site. Residues Asp-13 and Gly-40 each contribute to the Mg(2+) site. IMP contacts are provided by residues 13–16 (DEGK), 38–41 (NAGH), Thr-128, Arg-142, Gln-223, Thr-238, and Arg-302. His-41 (proton donor) is an active-site residue. 298 to 304 (VTTGRPR) contacts substrate. GTP contacts are provided by residues Arg-304, 330–332 (KLD), and 412–414 (GVG).

Belongs to the adenylosuccinate synthetase family. Homodimer. Requires Mg(2+) as cofactor.

It is found in the cytoplasm. The catalysed reaction is IMP + L-aspartate + GTP = N(6)-(1,2-dicarboxyethyl)-AMP + GDP + phosphate + 2 H(+). The protein operates within purine metabolism; AMP biosynthesis via de novo pathway; AMP from IMP: step 1/2. Functionally, plays an important role in the de novo pathway of purine nucleotide biosynthesis. Catalyzes the first committed step in the biosynthesis of AMP from IMP. The protein is Adenylosuccinate synthetase of Halothermothrix orenii (strain H 168 / OCM 544 / DSM 9562).